Reading from the N-terminus, the 198-residue chain is Neutrophil gelatinase-associated lipocalin (198 aa).

The signal sequence occupies residues methionine 1–alanine 20. A Pyrrolidone carboxylic acid modification is found at glutamine 21. An a carboxymycobactin-binding site is contributed by tyrosine 72–threonine 74. N-linked (GlcNAc...) asparagine glycosylation occurs at asparagine 85. Residues cysteine 96 and cysteine 195 are joined by a disulfide bond. Residue tyrosine 126 participates in enterobactin binding. Lysine 145, lysine 154, and tyrosine 158 together coordinate a carboxymycobactin. Lysine 154 contacts enterobactin.

It belongs to the calycin superfamily. Lipocalin family. Monomer. Homodimer; disulfide-linked. Heterodimer; disulfide-linked with MMP9. As to expression, detected in the ureteric bud in embryonic kidney (at protein level).

It is found in the secreted. The protein localises to the cytoplasmic granule lumen. It localises to the cytoplasmic vesicle lumen. Its function is as follows. Iron-trafficking protein involved in multiple processes such as apoptosis, innate immunity and renal development. Binds iron through association with 2,3-dihydroxybenzoic acid (2,3-DHBA), a siderophore that shares structural similarities with bacterial enterobactin, and delivers or removes iron from the cell, depending on the context. Iron-bound form (holo-24p3) is internalized following binding to the SLC22A17 (24p3R) receptor, leading to release of iron and subsequent increase of intracellular iron concentration. In contrast, association of the iron-free form (apo-24p3) with the SLC22A17 (24p3R) receptor is followed by association with an intracellular siderophore, iron chelation and iron transfer to the extracellular medium, thereby reducing intracellular iron concentration. Involved in apoptosis due to interleukin-3 (IL3) deprivation: iron-loaded form increases intracellular iron concentration without promoting apoptosis, while iron-free form decreases intracellular iron levels, inducing expression of the proapoptotic protein BCL2L11/BIM, resulting in apoptosis. Involved in innate immunity; limits bacterial proliferation by sequestering iron bound to microbial siderophores, such as enterobactin. Can also bind siderophores from M.tuberculosis. In Rattus norvegicus (Rat), this protein is Neutrophil gelatinase-associated lipocalin (Lcn2).